A 376-amino-acid chain; its full sequence is UDP-N-acetylenolpyruvoylglucosamine reductase (376 aa).

Residues valine 48 to glycine 219 form the FAD-binding PCMH-type domain. Residue arginine 196 is part of the active site. Serine 274 acts as the Proton donor in catalysis. Residue glutamate 368 is part of the active site.

Belongs to the MurB family. FAD is required as a cofactor.

It localises to the cytoplasm. It catalyses the reaction UDP-N-acetyl-alpha-D-muramate + NADP(+) = UDP-N-acetyl-3-O-(1-carboxyvinyl)-alpha-D-glucosamine + NADPH + H(+). Its pathway is cell wall biogenesis; peptidoglycan biosynthesis. In terms of biological role, cell wall formation. The sequence is that of UDP-N-acetylenolpyruvoylglucosamine reductase from Cutibacterium acnes (strain DSM 16379 / KPA171202) (Propionibacterium acnes).